We begin with the raw amino-acid sequence, 83 residues long: Phytosulfokines 4 (83 aa).

Residues 1–28 form the signal peptide; sequence MAARTVAVAAALAVLLIFAASSATVAMA. A propeptide spanning residues 29–74 is cleaved from the precursor; it reads GRPTPTTSLDEEAAQAAAQSEIGGGCKEGEGEEECLARRTLTAHTD. Tyr-75 and Tyr-77 each carry sulfotyrosine. Residues 80–83 constitute a propeptide that is removed on maturation; that stretch reads QHHN.

The protein belongs to the phytosulfokine family. In terms of processing, sulfation is important for activity and for the binding to a putative membrane receptor. PSK-alpha is produced by endopeptidase digestion. PSK-beta is produced from PSK-alpha by exopeptidase digestion.

It localises to the secreted. Functionally, promotes plant cell differentiation, organogenesis and somatic embryogenesis as well as cell proliferation. The sequence is that of Phytosulfokines 4 (PSK4) from Oryza sativa subsp. japonica (Rice).